A 76-amino-acid polypeptide reads, in one-letter code: RNA-binding protein KhpA (76 aa).

The region spanning 29–76 is the KH domain; it reads QNIIELRVSPKDVGKVIGKNGRIAKSLRAILTAASVKAGKNFSLEIID.

The protein belongs to the KhpA RNA-binding protein family. As to quaternary structure, forms a complex with KhpB.

It is found in the cytoplasm. A probable RNA chaperone. Forms a complex with KhpB which binds to cellular RNA and controls its expression. Plays a role in peptidoglycan (PG) homeostasis and cell length regulation. The chain is RNA-binding protein KhpA from Leptospira interrogans serogroup Icterohaemorrhagiae serovar copenhageni (strain Fiocruz L1-130).